The chain runs to 264 residues: Probable glycerophosphodiester phosphodiesterase 2 (264 aa).

The 239-residue stretch at 17-255 (RIAMAHRGFT…DRADLLRDVL (239 aa)) folds into the GP-PDE domain. Histidine 22 acts as the Proton acceptor in catalysis. Residues glutamate 50, aspartate 52, and histidine 65 each contribute to the a divalent metal cation site. Residue histidine 65 is the Proton donor of the active site.

This sequence belongs to the glycerophosphoryl diester phosphodiesterase family. A divalent metal cation is required as a cofactor.

The catalysed reaction is a sn-glycero-3-phosphodiester + H2O = an alcohol + sn-glycerol 3-phosphate + H(+). In terms of biological role, glycerophosphodiester phosphodiesterase hydrolyzes glycerophosphodiesters into glycerol-3-phosphate (G3P) and the corresponding alcohol. This chain is Probable glycerophosphodiester phosphodiesterase 2, found in Mycobacterium tuberculosis (strain ATCC 25618 / H37Rv).